Here is a 143-residue protein sequence, read N- to C-terminus: Large ribosomal subunit protein uL11 (143 aa).

Belongs to the universal ribosomal protein uL11 family. As to quaternary structure, part of the ribosomal stalk of the 50S ribosomal subunit. Interacts with L10 and the large rRNA to form the base of the stalk. L10 forms an elongated spine to which L12 dimers bind in a sequential fashion forming a multimeric L10(L12)X complex. One or more lysine residues are methylated.

In terms of biological role, forms part of the ribosomal stalk which helps the ribosome interact with GTP-bound translation factors. This is Large ribosomal subunit protein uL11 from Janthinobacterium sp. (strain Marseille) (Minibacterium massiliensis).